The primary structure comprises 344 residues: Dihydroorotate dehydrogenase (quinone) (344 aa).

Residues 65–69 and Thr89 each bind FMN; that span reads AGFDK. Residue Lys69 coordinates substrate. 114–118 contacts substrate; it reads NRMGF. FMN is bound by residues Asn145 and Asn178. Asn178 provides a ligand contact to substrate. The Nucleophile role is filled by Ser181. Asn183 contributes to the substrate binding site. FMN contacts are provided by Lys215 and Thr243. Position 244-245 (244-245) interacts with substrate; it reads NT. FMN is bound by residues Gly269, Gly298, and 319 to 320; that span reads YT.

This sequence belongs to the dihydroorotate dehydrogenase family. Type 2 subfamily. In terms of assembly, monomer. Requires FMN as cofactor.

Its subcellular location is the cell membrane. The enzyme catalyses (S)-dihydroorotate + a quinone = orotate + a quinol. Its pathway is pyrimidine metabolism; UMP biosynthesis via de novo pathway; orotate from (S)-dihydroorotate (quinone route): step 1/1. Catalyzes the conversion of dihydroorotate to orotate with quinone as electron acceptor. This is Dihydroorotate dehydrogenase (quinone) from Clavibacter sepedonicus (Clavibacter michiganensis subsp. sepedonicus).